The following is a 175-amino-acid chain: Large ribosomal subunit protein uL10 (175 aa).

This sequence belongs to the universal ribosomal protein uL10 family. Part of the ribosomal stalk of the 50S ribosomal subunit. The N-terminus interacts with L11 and the large rRNA to form the base of the stalk. The C-terminus forms an elongated spine to which L12 dimers bind in a sequential fashion forming a multimeric L10(L12)X complex.

Forms part of the ribosomal stalk, playing a central role in the interaction of the ribosome with GTP-bound translation factors. This Mycolicibacterium smegmatis (strain ATCC 700084 / mc(2)155) (Mycobacterium smegmatis) protein is Large ribosomal subunit protein uL10.